Consider the following 319-residue polypeptide: HTH-type transcriptional regulator YidZ (319 aa).

The 58-residue stretch at Leu8–Thr65 folds into the HTH lysR-type domain. A DNA-binding region (H-T-H motif) is located at residues Val25 to Ala44.

It belongs to the LysR transcriptional regulatory family.

Its function is as follows. Involved in anaerobic NO protection. This is HTH-type transcriptional regulator YidZ from Escherichia coli O6:H1 (strain CFT073 / ATCC 700928 / UPEC).